The sequence spans 102 residues: Putative lipid-transfer protein DIR1 (102 aa).

The N-terminal stretch at 1–25 is a signal peptide; sequence MASKKAAMVMMAMIVIMAMLVDTSV. Cystine bridges form between cysteine 30–cysteine 67, cysteine 40–cysteine 56, cysteine 57–cysteine 94, and cysteine 69–cysteine 102. Glutamine 34 lines the a 1-acyl-sn-glycero-3-phosphocholine pocket. Position 36 (glutamate 36) interacts with Zn(2+). Asparagine 38 is a binding site for a 1-acyl-sn-glycero-3-phosphocholine. Histidine 62 contributes to the Zn(2+) binding site.

The protein belongs to the A9/FIL1 family. In terms of assembly, self-interacts and binds to AZI1. Does not interact with PDLP1. It depends on Zn(2+) as a cofactor.

It localises to the secreted. It is found in the extracellular space. Its subcellular location is the apoplast. The protein resides in the endoplasmic reticulum. The protein localises to the cell junction. It localises to the plasmodesma. In terms of biological role, putative lipid transfer protein required for systemic acquired resistance (SAR) long distance signaling. May interact with a lipid-derived molecule to promote long distance signaling associated with SAR. Together with AZI1, required for glycerol-3-phosphate- (G3P) and azelaic acid- (AA) induced systemic acquired resistance (SAR). Component of plant systemic immunity involved in priming defenses in a AA-dependent manner, by modulating production and/or translocation of a mobile signal(s) during SAR. Is able to bind with high affinity monoacylated phospholipids, mainly lysophosphatidylcholines. The polypeptide is Putative lipid-transfer protein DIR1 (DIR1) (Arabidopsis thaliana (Mouse-ear cress)).